The chain runs to 390 residues: Lipid-A-disaccharide synthase (390 aa).

The protein belongs to the LpxB family.

It carries out the reaction a lipid X + a UDP-2-N,3-O-bis[(3R)-3-hydroxyacyl]-alpha-D-glucosamine = a lipid A disaccharide + UDP + H(+). The protein operates within bacterial outer membrane biogenesis; LPS lipid A biosynthesis. Its function is as follows. Condensation of UDP-2,3-diacylglucosamine and 2,3-diacylglucosamine-1-phosphate to form lipid A disaccharide, a precursor of lipid A, a phosphorylated glycolipid that anchors the lipopolysaccharide to the outer membrane of the cell. This Haemophilus influenzae (strain 86-028NP) protein is Lipid-A-disaccharide synthase.